Here is a 156-residue protein sequence, read N- to C-terminus: Putative pre-16S rRNA nuclease (156 aa).

It belongs to the YqgF nuclease family.

It localises to the cytoplasm. In terms of biological role, could be a nuclease involved in processing of the 5'-end of pre-16S rRNA. This is Putative pre-16S rRNA nuclease from Phenylobacterium zucineum (strain HLK1).